Reading from the N-terminus, the 202-residue chain is Large ribosomal subunit protein eL13 (202 aa).

The disordered stretch occupies residues 183 to 202 (GIREKRAKEKAEAEAEKAKK).

Belongs to the eukaryotic ribosomal protein eL13 family. As to quaternary structure, component of the large ribosomal subunit. Mature ribosomes consist of a small (40S) and a large (60S) subunit. The 40S subunit contains about 32 different proteins and 1 molecule of RNA (18S). The 60S subunit contains 45 different proteins and 3 molecules of RNA (25S, 5.8S and 5S).

The protein localises to the cytoplasm. In terms of biological role, component of the ribosome, a large ribonucleoprotein complex responsible for the synthesis of proteins in the cell. The small ribosomal subunit (SSU) binds messenger RNAs (mRNAs) and translates the encoded message by selecting cognate aminoacyl-transfer RNA (tRNA) molecules. The large subunit (LSU) contains the ribosomal catalytic site termed the peptidyl transferase center (PTC), which catalyzes the formation of peptide bonds, thereby polymerizing the amino acids delivered by tRNAs into a polypeptide chain. The nascent polypeptides leave the ribosome through a tunnel in the LSU and interact with protein factors that function in enzymatic processing, targeting, and the membrane insertion of nascent chains at the exit of the ribosomal tunnel. The sequence is that of Large ribosomal subunit protein eL13 from Candida albicans (strain SC5314 / ATCC MYA-2876) (Yeast).